The following is a 537-amino-acid chain: 2-isopropylmalate synthase (537 aa).

The region spanning 8–273 (IIIFDTTLRD…FLGRPVDSME (266 aa)) is the Pyruvate carboxyltransferase domain. 4 residues coordinate Mn(2+): Asp17, His208, His210, and Asn244. The interval 408-537 (RLELVQVSCG…PSEPVLTSKN (130 aa)) is regulatory domain.

The protein belongs to the alpha-IPM synthase/homocitrate synthase family. LeuA type 1 subfamily. Homodimer. Requires Mn(2+) as cofactor.

It is found in the cytoplasm. The enzyme catalyses 3-methyl-2-oxobutanoate + acetyl-CoA + H2O = (2S)-2-isopropylmalate + CoA + H(+). It functions in the pathway amino-acid biosynthesis; L-leucine biosynthesis; L-leucine from 3-methyl-2-oxobutanoate: step 1/4. Catalyzes the condensation of the acetyl group of acetyl-CoA with 3-methyl-2-oxobutanoate (2-ketoisovalerate) to form 3-carboxy-3-hydroxy-4-methylpentanoate (2-isopropylmalate). The sequence is that of 2-isopropylmalate synthase from Crocosphaera subtropica (strain ATCC 51142 / BH68) (Cyanothece sp. (strain ATCC 51142)).